The following is a 550-amino-acid chain: Dihydroxy-acid dehydratase (550 aa).

Residue Asp78 participates in Mg(2+) binding. Position 119 (Cys119) interacts with [2Fe-2S] cluster. Mg(2+) is bound by residues Asp120 and Lys121. Lys121 carries the post-translational modification N6-carboxylysine. Cys191 serves as a coordination point for [2Fe-2S] cluster. Residue Glu440 participates in Mg(2+) binding. Ser466 serves as the catalytic Proton acceptor.

Belongs to the IlvD/Edd family. In terms of assembly, homodimer. Requires [2Fe-2S] cluster as cofactor. It depends on Mg(2+) as a cofactor.

It carries out the reaction (2R)-2,3-dihydroxy-3-methylbutanoate = 3-methyl-2-oxobutanoate + H2O. It catalyses the reaction (2R,3R)-2,3-dihydroxy-3-methylpentanoate = (S)-3-methyl-2-oxopentanoate + H2O. The protein operates within amino-acid biosynthesis; L-isoleucine biosynthesis; L-isoleucine from 2-oxobutanoate: step 3/4. Its pathway is amino-acid biosynthesis; L-valine biosynthesis; L-valine from pyruvate: step 3/4. Functionally, functions in the biosynthesis of branched-chain amino acids. Catalyzes the dehydration of (2R,3R)-2,3-dihydroxy-3-methylpentanoate (2,3-dihydroxy-3-methylvalerate) into 2-oxo-3-methylpentanoate (2-oxo-3-methylvalerate) and of (2R)-2,3-dihydroxy-3-methylbutanoate (2,3-dihydroxyisovalerate) into 2-oxo-3-methylbutanoate (2-oxoisovalerate), the penultimate precursor to L-isoleucine and L-valine, respectively. This Methanococcus maripaludis (strain C6 / ATCC BAA-1332) protein is Dihydroxy-acid dehydratase.